The sequence spans 176 residues: Cytochrome b (176 aa).

3 helical membrane passes run 33–53, 77–98, and 113–133; these read FGSL…FLAM, WLIR…FLHV, and WNIG…GYVL. Residues His83 and His97 each contribute to the heme b site.

This sequence belongs to the cytochrome b family. The cytochrome bc1 complex contains 11 subunits: 3 respiratory subunits (MT-CYB, CYC1 and UQCRFS1), 2 core proteins (UQCRC1 and UQCRC2) and 6 low-molecular weight proteins (UQCRH/QCR6, UQCRB/QCR7, UQCRQ/QCR8, UQCR10/QCR9, UQCR11/QCR10 and a cleavage product of UQCRFS1). This cytochrome bc1 complex then forms a dimer. The cofactor is heme b.

It is found in the mitochondrion inner membrane. Component of the ubiquinol-cytochrome c reductase complex (complex III or cytochrome b-c1 complex) that is part of the mitochondrial respiratory chain. The b-c1 complex mediates electron transfer from ubiquinol to cytochrome c. Contributes to the generation of a proton gradient across the mitochondrial membrane that is then used for ATP synthesis. This chain is Cytochrome b (MT-CYB), found in Sciurus carolinensis (Eastern gray squirrel).